The sequence spans 188 residues: Pyridoxal 5'-phosphate synthase subunit PdxT (188 aa).

Residue 46–48 participates in L-glutamine binding; sequence GES. The active-site Nucleophile is the Cys78. Residues Arg105 and 133 to 134 each bind L-glutamine; that span reads IR. Active-site charge relay system residues include His169 and Glu171.

It belongs to the glutaminase PdxT/SNO family. As to quaternary structure, in the presence of PdxS, forms a dodecamer of heterodimers. Only shows activity in the heterodimer.

The enzyme catalyses aldehydo-D-ribose 5-phosphate + D-glyceraldehyde 3-phosphate + L-glutamine = pyridoxal 5'-phosphate + L-glutamate + phosphate + 3 H2O + H(+). It carries out the reaction L-glutamine + H2O = L-glutamate + NH4(+). The protein operates within cofactor biosynthesis; pyridoxal 5'-phosphate biosynthesis. Functionally, catalyzes the hydrolysis of glutamine to glutamate and ammonia as part of the biosynthesis of pyridoxal 5'-phosphate. The resulting ammonia molecule is channeled to the active site of PdxS. In Thermosipho africanus (strain TCF52B), this protein is Pyridoxal 5'-phosphate synthase subunit PdxT.